The primary structure comprises 136 residues: MGDKTKVQVSKLKPGRYIIIDGEPCRIVNITVSSPGKHGSAKARIEAVGIFDGKVRSIVKPTSAEVDVPIIDKRVGQVIAITPDTVQIMDMETYELYDVPIETGVEDEVKDQLKEGITVEYWETLGRIQIKKVRGE.

Residue K37 is modified to Hypusine.

It belongs to the eIF-5A family.

Its subcellular location is the cytoplasm. Its function is as follows. Functions by promoting the formation of the first peptide bond. The sequence is that of Translation initiation factor 5A (eIF5A) from Thermococcus gammatolerans (strain DSM 15229 / JCM 11827 / EJ3).